The following is a 273-amino-acid chain: DNA repair protein RecO (273 aa).

Residues 250–273 (NVGQNPSGKDDLNERRDVDGTGES) are disordered. Residues 257–273 (GKDDLNERRDVDGTGES) are compositionally biased toward basic and acidic residues.

Belongs to the RecO family.

Its function is as follows. Involved in DNA repair and RecF pathway recombination. This chain is DNA repair protein RecO, found in Desulfitobacterium hafniense (strain Y51).